The chain runs to 2153 residues: Non-reducing polyketide synthase albA (2153 aa).

Residues 8-244 form an N-terminal acylcarrier protein transacylase domain (SAT) region; sequence YLFGDQTSDI…VKAPIHGPYH (237 aa). Residues 375–806 enclose the Ketosynthase family 3 (KS3) domain; it reads NSKIAIIGMS…GGNTALLLED (432 aa). Active-site for beta-ketoacyl synthase activity residues include Cys-547, His-682, and His-724. Positions 912–1232 are malonyl-CoA:ACP transacylase (MAT) domain; the sequence is FVFTGQGAQY…LASLHLAGID (321 aa). The active-site For acyl/malonyl transferase activity is the Ser-1001. An N-terminal hotdog fold region spans residues 1286–1425; the sequence is HEYLTTAAQK…CTVRFFDCAA (140 aa). One can recognise a PKS/mFAS DH domain in the interval 1286–1598; it reads HEYLTTAAQK…FQALSRKILD (313 aa). The segment at 1290-1603 is product template (PT) domain; the sequence is TTAAQKVIET…RKILDTVLPP (314 aa). The active-site Proton acceptor; for dehydratase activity is His-1326. The segment at 1452-1598 is C-terminal hotdog fold; that stretch reads DAHRLGRGMV…FQALSRKILD (147 aa). The active-site Proton donor; for dehydratase activity is Asp-1511. Residues 1608 to 1643 form a disordered region; it reads KGPARPAASAQKAAPAAAASKSRASAPAPAKPAAKP. Residues 1610-1643 show a composition bias toward low complexity; sequence PARPAASAQKAAPAAAASKSRASAPAPAKPAAKP. Residues 1643–1720 enclose the Carrier 1 domain; that stretch reads PSAPSLVKRA…DFKQFLAPMS (78 aa). The residue at position 1680 (Ser-1680) is an O-(pantetheine 4'-phosphoryl)serine. The disordered stretch occupies residues 1720–1765; that stretch reads SQGEASDGSTSDPESSSSFNGGSSTDESSAGSPVSSPPNEKVTQVE. The segment covering 1725–1748 has biased composition (low complexity); sequence SDGSTSDPESSSSFNGGSSTDESS. Residues 1749 to 1765 are compositionally biased toward polar residues; that stretch reads AGSPVSSPPNEKVTQVE. In terms of domain architecture, Carrier 2 spans 1764-1841; sequence VEQHATIKEI…DVEDALGLKP (78 aa). Ser-1801 carries the O-(pantetheine 4'-phosphoryl)serine modification. The interval 1879–2151 is claisen cyclase domain; it reads SPHPRSTSIL…ELGSFIGNAM (273 aa). Ser-1969 functions as the For Claisen cyclase activity in the catalytic mechanism.

It catalyses the reaction 6 malonyl-CoA + acetyl-CoA + 6 H(+) = naphtopyrone YWA1 + 6 CO2 + 7 CoA + H2O. The protein operates within secondary metabolite biosynthesis. Its function is as follows. Non-reducing polyketide synthase; part of the gene cluster that mediates the biosynthesis of aurasperone B, a dimeric gamma-naphthopyrone. The first step in the biosynthesis of aurasperone B is the production of gamma-naphthopyrone precursor YWA1 by the non-reducing polyketide synthase albA, via condensation of one acetyl-CoA starter unit with 6 malonyl-CoA units. YWA1 is then methylated by aunE at position C-6 to yield foncesin which is further methylated at position C-8 by aunD to produce fonsecin B. A key enzyme in the biosynthetic pathway is the cytochrome P450 monooxygenase aunB which catalyzes the oxidative dimerization of fonsecin B to aurasperone B. AunB also catalyzes the oxidative dimerization of rubrofusarin B into aurasperone A. The sequence is that of Non-reducing polyketide synthase albA from Aspergillus niger (strain ATCC MYA-4892 / CBS 513.88 / FGSC A1513).